A 378-amino-acid chain; its full sequence is Stimulator of interferon genes protein (378 aa).

Topologically, residues 1 to 17 are cytoplasmic; that stretch reads MPHSSLHPSIPQPRGLR. The tract at residues 1–190 is mediates interaction with ZDHHC1 and ZDHHC11; it reads MPHSSLHPSI…IYNQFHNNTL (190 aa). A helical transmembrane segment spans residues 18–34; the sequence is AQKAALVLLSACLVALW. Residues 35–44 are Lumenal-facing; it reads GLGEPPDYTL. Residues 45–69 form a helical membrane-spanning segment; that stretch reads KWLVLHLASQQMGLLIKGICSLAEE. At 70–91 the chain is on the cytoplasmic side; that stretch reads LCHVHSRYHGSYWRAVRACLCS. Cys88 carries the S-palmitoyl cysteine lipid modification. A helical transmembrane segment spans residues 92–106; that stretch reads SMRCGALLLLSCYFY. At 107 to 116 the chain is on the lumenal side; that stretch reads CSLPNMADLP. Residues 117–134 traverse the membrane as a helical segment; sequence FTWMLALLGLSQALNILL. The Cytoplasmic segment spans residues 135-378; the sequence is GLQGLAPAEV…KPLPLRSDVF (244 aa). Lys150 participates in a covalent cross-link: Glycyl lysine isopeptide (Lys-Gly) (interchain with G-Cter in ubiquitin). A cyclic dinucleotide-binding domain (CBD) region spans residues 153–339; sequence FNVAHGLAWS…LQHLRQEERE (187 aa). 2',3'-cGAMP is bound by residues Ser162 and Tyr167. Ser162 and Tyr167 together coordinate 3',3'-c-di-GMP. 2',3'-cUAMP is bound at residue Tyr167. Residue Lys236 forms a Glycyl lysine isopeptide (Lys-Gly) (interchain with G-Cter in ubiquitin) linkage. 2',3'-cGAMP is bound by residues Arg238 and Thr263. The 2',3'-cUAMP site is built by Arg238 and Thr263. 3',3'-c-di-GMP-binding positions include 238-241 and Thr263; that span reads RVYT. Positions 339–378 are C-terminal tail (CTT); that stretch reads EVTMGSTETSVMPGSSVLSQEPELLISGLEKPLPLRSDVF. Ser354 carries the phosphoserine modification. Phosphoserine; by TBK1 is present on residues Ser357 and Ser365. The pLxIS motif signature appears at 362–365; that stretch reads LLIS.

This sequence belongs to the STING family. As to quaternary structure, homodimer; forms a homodimer in absence of cyclic nucleotide (c-di-GMP or cGAMP); 'Lys-63'-linked ubiquitination at Lys-150 is required for homodimerization. Homotetramer; in presence of cyclic nucleotide (c-di-GMP or cGAMP), forms tetramers and higher-order oligomers through side-by-side packing. Interacts (when phosphorylated) with IRF3; following activation and phosphorylation on the pLxIS motif by TBK1, recruits IRF3. Interacts with RIGI, MAVS and SSR2. Interacts with RNF5 and TRIM56. Interacts with TBK1; when homodimer, leading to subsequent production of IFN-beta. Interacts with IFIT1 and IFIT2. Interacts with TRIM29; this interaction induces STING1 ubiquitination and subsequent degradation. Associates with the MHC-II complex. Interacts with STEEP1; interaction takes place upon cGAMP-activation and STING1 phosphorylation by MAP3K7/TAK1 and promotes STING1 translocation to COPII vesicles. Interacts with SEC24A, SEC24B and SEC24C; promoting translocation to COPII vesicles. Interacts (when ubiquitinated) with SQSTM1; leading to relocalization to autophagosomes. Interacts with SURF4. Interacts with HNRNPA2B1. Interacts with ZDHHC1; ZDHHC1 constitutively interacts with STING1 and in presence of DNA viruses activates it by promoting its cGAMP-induced oligomerization and the recruitment of downstream signaling components. Interacts with ZDHHC11; in presence of DNA viruses promotes the recruitment of IRF3 to STING1. Interacts with TOMM70. Interacts with TAB1; promoting recruitment of TAB1 to the endoplasmic reticulum membrane and subsequent activation of MAP3K7/TAK1. Interacts (via transmembrane domain) with TMEM203. Interacts with DDX41. Phosphorylation by TBK1 leads to activation and production of IFN-beta. Following cyclic nucleotide (c-di-GMP or cGAMP)-binding, activation and translocation from the endoplasmic reticulum, STING1 is phosphorylated by TBK1 at Ser-365 in the pLxIS motif. The phosphorylated pLxIS motif constitutes an IRF3-binding motif, leading to recruitment of the transcription factor IRF3 to induce type-I interferons and other cytokines. Phosphorylated on tyrosine residues upon MHC-II aggregation. Dephosphorylation by PPP6C leads to inactivation and decreased production of IFN-beta. Phosphorylation at Ser-357 is also required to activate IRF3. Phosphorylation at Ser-354 by MAP3K7/TAK1 facilitates its interaction with STEEP1, promoting STING1 translocation to COPII vesicles. In terms of processing, ubiquitinated. Ubiquitinated via 'Lys-63'-linked ubiquitin chains in response to double-stranded DNA treatment, leading to relocalization to autophagosomes and subsequent degradation; this process is dependent on SQSTM1. 'Lys-63'-linked ubiquitination mediated by TRIM56 at Lys-150 promotes homodimerization and recruitment of the antiviral kinase TBK1 and subsequent production of IFN-beta. 'Lys-48'-linked polyubiquitination at Lys-150 occurring after viral infection is mediated by RNF5 and leads to proteasomal degradation. 'Lys-11'-linked polyubiquitination at Lys-150 by RNF26 leads to stabilize STING1: it protects STING1 from RNF5-mediated 'Lys-48'-linked polyubiquitination. 'Lys-33'-linked and 'Lys-48'-linked deubiquitinated by USP20; leading to its stabilization and promotion of innate antiviral response. 'Lys-48'-linked deubiquitinated by USP44; leading to its stabilization and promotion of innate antiviral response. 'Lys-63'-linked deubiquitinated by USP49; leading to inhibition of the subsequent recruitment of TBK1 to the signaling complex. 'Lys-63'-linked ubiquitination mediated by RNF39 promotes the activation of the cGAS-STING pathway. Post-translationally, palmitoylation takes place in the Golgi apparatus and creates a platform for the recruitment of TBK1.

The protein resides in the endoplasmic reticulum membrane. It localises to the cytoplasm. It is found in the perinuclear region. Its subcellular location is the endoplasmic reticulum-Golgi intermediate compartment membrane. The protein localises to the golgi apparatus membrane. The protein resides in the cytoplasmic vesicle. It localises to the autophagosome membrane. It is found in the mitochondrion outer membrane. Its subcellular location is the cell membrane. It carries out the reaction H(+)(in) = H(+)(out). In terms of biological role, facilitator of innate immune signaling that acts as a sensor of cytosolic DNA from bacteria and viruses and promotes the production of type I interferon (IFN-alpha and IFN-beta). Innate immune response is triggered in response to non-CpG double-stranded DNA from viruses and bacteria delivered to the cytoplasm. Acts by binding cyclic dinucleotides: recognizes and binds cyclic di-GMP (c-di-GMP), a second messenger produced by bacteria, cyclic UMP-AMP (2',3'-cUAMP), and cyclic GMP-AMP (cGAMP), a messenger produced by CGAS in response to DNA virus in the cytosol. Upon binding to c-di-GMP or cGAMP, STING oligomerizes, translocates from the endoplasmic reticulum and is phosphorylated by TBK1 on the pLxIS motif, leading to recruitment and subsequent activation of the transcription factor IRF3 to induce expression of type I interferon and exert a potent anti-viral state. Exhibits 2',3' phosphodiester linkage-specific ligand recognition: can bind both 2'-3' linked cGAMP (2'-3'-cGAMP) and 3'-3' linked cGAMP but is preferentially activated by 2'-3' linked cGAMP. The preference for 2'-3'-cGAMP, compared to other linkage isomers is probably due to the ligand itself, whichs adopts an organized free-ligand conformation that resembles the STING1-bound conformation and pays low energy costs in changing into the active conformation. In addition to promote the production of type I interferons, plays a direct role in autophagy. Following cGAMP-binding, STING1 buds from the endoplasmic reticulum into COPII vesicles, which then form the endoplasmic reticulum-Golgi intermediate compartment (ERGIC). The ERGIC serves as the membrane source for WIPI2 recruitment and LC3 lipidation, leading to formation of autophagosomes that target cytosolic DNA or DNA viruses for degradation by the lysosome. Promotes autophagy by acting as a proton channel that directs proton efflux from the Golgi to facilitate MAP1LC3B/LC3B lipidation. The autophagy- and interferon-inducing activities can be uncoupled and autophagy induction is independent of TBK1 phosphorylation. Autophagy is also triggered upon infection by bacteria: following c-di-GMP-binding, which is produced by live Gram-positive bacteria, promotes reticulophagy. May be involved in translocon function, the translocon possibly being able to influence the induction of type I interferons. May be involved in transduction of apoptotic signals via its association with the major histocompatibility complex class II (MHC-II). This is Stimulator of interferon genes protein from Bos taurus (Bovine).